We begin with the raw amino-acid sequence, 371 residues long: S-adenosylmethionine:tRNA ribosyltransferase-isomerase (371 aa).

The protein belongs to the QueA family. Monomer.

Its subcellular location is the cytoplasm. It carries out the reaction 7-aminomethyl-7-carbaguanosine(34) in tRNA + S-adenosyl-L-methionine = epoxyqueuosine(34) in tRNA + adenine + L-methionine + 2 H(+). It participates in tRNA modification; tRNA-queuosine biosynthesis. Functionally, transfers and isomerizes the ribose moiety from AdoMet to the 7-aminomethyl group of 7-deazaguanine (preQ1-tRNA) to give epoxyqueuosine (oQ-tRNA). This chain is S-adenosylmethionine:tRNA ribosyltransferase-isomerase, found in Prochlorococcus marinus (strain MIT 9303).